The following is a 71-amino-acid chain: Small ribosomal subunit protein bS21 (71 aa).

It belongs to the bacterial ribosomal protein bS21 family.

The polypeptide is Small ribosomal subunit protein bS21 (Cellvibrio japonicus (strain Ueda107) (Pseudomonas fluorescens subsp. cellulosa)).